The following is a 104-amino-acid chain: Large ribosomal subunit protein eL30 (104 aa).

Belongs to the eukaryotic ribosomal protein eL30 family.

The protein is Large ribosomal subunit protein eL30 (RPL30) of Leishmania major.